We begin with the raw amino-acid sequence, 409 residues long: POU domain, class 4, transcription factor 2 (409 aa).

Residues Y26 to P93 form a disordered region. Residues S31–N52 show a composition bias toward low complexity. The segment covering A53–R69 has biased composition (gly residues). Residues C91–H237 form a required for transcriptional activation region. Positions R110–I119 match the POU-IV box motif. Residues A153 to A166 are compositionally biased toward low complexity. Residues A153–L188 are disordered. Positions T170–P184 are enriched in basic residues. A Nuclear speckle targeting signal motif is present at residues H171–H185. The required for DNA-binding and transcriptional repression stretch occupies residues A238–I409. The region spanning D250 to E327 is the POU-specific domain. The homeobox DNA-binding region spans K345–K404.

Belongs to the POU transcription factor family. Class-4 subfamily. In terms of assembly, interacts with POU4F1; this interaction inhibits both POU4F1 DNA-binding and transcriptional activities. Interacts (C-terminus) with ESR1 (via DNA-binding domain); this interaction increases the estrogen receptor ESR1 transcriptional activity in a DNA- and ligand 17-beta-estradiol-independent manner. Interacts (via C-terminus) with TP53 (via N-terminus). Interacts with DLX1 (via homeobox DNA-binding domain); this interaction suppresses DLX1-mediated transcriptional activity in postnatal retina enhancing retinal ganglion cell (RGC) differentiation. Interacts with DLX2 (via homeobox DNA-binding domain); this interaction enhances RGC differentiation. Interacts (via C-terminus) with ISL1 (via C-terminus). Interacts with ISL2. Interacts with LHX2. Expressed in the brain. Expressed in the ganglion cell layer of the retina.

It localises to the nucleus. The protein resides in the nucleus speckle. Its subcellular location is the cytoplasm. Tissue-specific DNA-binding transcription factor involved in the development and differentiation of target cells. Functions either as activator or repressor modulating the rate of target gene transcription through RNA polymerase II enzyme in a promoter-dependent manner. Binds to the consensus octamer motif 5'-AT[A/T]A[T/A]T[A/T]A-3' of promoter of target genes. Plays a fundamental role in the gene regulatory network essential for retinal ganglion cell (RGC) differentiation. Binds to an octamer site to form a ternary complex with ISL1; cooperates positively with ISL1 and ISL2 to potentiate transcriptional activation of RGC target genes being involved in RGC fate commitment in the developing retina and RGC axon formation and pathfinding. Inhibits DLX1 and DLX2 transcriptional activities preventing DLX1- and DLX2-mediated ability to promote amacrine cell fate specification. In cooperation with TP53 potentiates transcriptional activation of BAX promoter activity increasing neuronal cell apoptosis. Negatively regulates BAX promoter activity in the absence of TP53. Acts as a transcriptional coactivator via its interaction with the transcription factor ESR1 by enhancing its effect on estrogen response element (ERE)-containing promoter. Antagonizes the transcriptional stimulatory activity of POU4F1 by preventing its binding to an octamer motif. Involved in TNFSF11-mediated terminal osteoclast differentiation. The protein is POU domain, class 4, transcription factor 2 of Homo sapiens (Human).